We begin with the raw amino-acid sequence, 806 residues long: Centrosomal protein of 85 kDa-like (806 aa).

Disordered stretches follow at residues 1 to 27 (MWGRFLAPEAGGRDSPSGARSFPAGSD), 51 to 89 (NNHLRRHSITSDSGDTGIGTSCSDSVEDHSTSSGTLSFK), and 101 to 146 (HVMP…SSLD). A Phosphoserine modification is found at Ser-15. The segment covering 60 to 74 (TSDSGDTGIGTSCSD) has biased composition (polar residues). The segment covering 135–146 (DHSRGERDSSLD) has biased composition (basic and acidic residues). Ser-207 is subject to Phosphoserine. Residues 308 to 353 (PLEGRTTDDSYSLAPWQQPQTEEFQQGSETPMQVLTGSSRQSYSPP) are disordered. Over residues 322–351 (PWQQPQTEEFQQGSETPMQVLTGSSRQSYS) the composition is skewed to polar residues. A coiled-coil region spans residues 442 to 644 (QEELEQKLAS…ILEIQSMQGK (203 aa)).

Belongs to the CEP85 family.

The protein resides in the cytoplasm. It localises to the cytoskeleton. The protein localises to the microtubule organizing center. It is found in the centrosome. Functionally, plays an essential role in neuronal cell migration. The sequence is that of Centrosomal protein of 85 kDa-like from Mus musculus (Mouse).